The primary structure comprises 185 residues: Ribosome-recycling factor (185 aa).

This sequence belongs to the RRF family.

It localises to the cytoplasm. In terms of biological role, responsible for the release of ribosomes from messenger RNA at the termination of protein biosynthesis. May increase the efficiency of translation by recycling ribosomes from one round of translation to another. This chain is Ribosome-recycling factor, found in Mycobacterium avium (strain 104).